Reading from the N-terminus, the 141-residue chain is Hemoglobin subunit alpha-D (141 aa).

A Globin domain is found at 1–141 (VLTAEDRRLL…VADVLCEKYR (141 aa)). The heme b site is built by Q58 and H87.

Belongs to the globin family. Heterotetramer of two alpha chains and two beta chains. In terms of tissue distribution, red blood cells.

Its function is as follows. Involved in oxygen transport from the lung to the various peripheral tissues. In Drymarchon melanurus erebennus (Texas indigo snake), this protein is Hemoglobin subunit alpha-D.